We begin with the raw amino-acid sequence, 276 residues long: Mitochondrial outer membrane protein porin 1 (276 aa).

The protein belongs to the eukaryotic mitochondrial porin (TC 1.B.8.1) family. As to expression, expressed in shoot meristems, root meristematic zone, lateral roots, leaves, stigma and anthers.

The protein localises to the mitochondrion outer membrane. In terms of biological role, forms a channel through the mitochondrial outer membrane that allows diffusion of small hydrophilic molecules. The channel adopts an open conformation at low or zero membrane potential and a closed conformation at potentials above 30-40 mV. The open state has a weak anion selectivity whereas the closed state is cation-selective. Involved in plant development at reproductive stage, is important for pollen development and may regulate hydrogen peroxide generation during disease resistance. This is Mitochondrial outer membrane protein porin 1 (VDAC1) from Arabidopsis thaliana (Mouse-ear cress).